The chain runs to 32 residues: Fimbrin sef21 (32 aa).

The protein resides in the fimbrium. The sequence is that of Fimbrin sef21 from Salmonella enteritidis.